Here is a 77-residue protein sequence, read N- to C-terminus: MLNIGFGNYISPQRLLAIVSPDSAPIKRLILEAREHHHLIDATHGRRTRAVLVLDGEIIVLSALHPETLVARLSPPP.

This sequence belongs to the RemA family.

This Thermosynechococcus vestitus (strain NIES-2133 / IAM M-273 / BP-1) protein is Putative regulatory protein tsl2331.